The sequence spans 227 residues: UPF0758 protein lpg2489 (227 aa).

Residues 102–225 (RLSNTQQTYA…YSIFAENKWV (124 aa)) enclose the MPN domain. Residues H173, H175, and D186 each coordinate Zn(2+). The JAMM motif signature appears at 173–186 (HNHPSGLSDASQQD).

It belongs to the UPF0758 family.

In Legionella pneumophila subsp. pneumophila (strain Philadelphia 1 / ATCC 33152 / DSM 7513), this protein is UPF0758 protein lpg2489.